Reading from the N-terminus, the 291-residue chain is Secreted effector protein PipB (291 aa).

Pentapeptide repeat domains lie at 154–193 (LNLR…NLVG) and 199–238 (ANLH…ILFG).

The protein localises to the secreted. It is found in the host membrane. Effector proteins function to alter host cell physiology and promote bacterial survival in host tissues. Does not appear to be required for the formation or the maintenance of either Salmonella-containing vacuole (SCV) or the Salmonella-induced filaments (Sifs). Not required for intracellular replication in phagocytic cells. The protein is Secreted effector protein PipB (pipB) of Salmonella typhimurium (strain LT2 / SGSC1412 / ATCC 700720).